Reading from the N-terminus, the 710-residue chain is MLSQYMEEFEQEPFEVGEFIERLTWRTNNELQNSEDFHPVALHDTFIQTIKDLKILQEKQQSKCERLEESLRQEKESHAKKIAKLQERHQTAIDVFGQLDEKINSVAGKIMHLGEQLENVNTPRSRSVEAQKLLNFMSEFLAAGPVIVNDIFADAARLSEAADVIQKLYAISQDLPPGNFAESKRKIEKKYDEVERRLIEEFATAQKSEDIERMKTLAQILSQFKGYTQCVDAYIEQSQMQPYSGKDIFIGIVPLCKHHYEIIQKVFANPQQVMSKFILNIYQLKLHQYAMTKLEDKKDEEKYLRTLYELYSRTLKLSTDLQIYMSTIDDDLLQKLTQQIFIKHLAGYAEMETKCLTAKCSTELEKFYASKKHQKTATTKGFRRNMEVLIATRANINIAAIEDYGGETFLSEELAINMLQEAKASLKRCRLLSNETELPGNAIKLNDILLRFLMHEHVDYALELGLQAVPLAEGRVFPQLYFFDVVQKTNIIVHLLDKLCHTSVIPCVSNTPKYSDYVFKKRILMEQIETKLDQGLDRSISAVIGWVKVYLQYEQKKTDYKPETDVDTISSAACLQVVQNLQPVIVQIKKCVDGENLQNVLTEFGTRLHRVIYDHLQTMQFNTAGAMCAICDVNEYRKCIRELDSPLVTQLFDILHALCNLLLVKPQNLQEVCTGDTLNYLDKSVVRQFIQLRTDFRIIKNTNYLKGIIE.

The stretch at 44-96 forms a coiled coil; that stretch reads DTFIQTIKDLKILQEKQQSKCERLEESLRQEKESHAKKIAKLQERHQTAIDVF.

The protein belongs to the SEC10 family. The exocyst complex is composed of Sec3/Exoc1, Sec5/Exoc2, Sec6/Exoc3, Sec8/Exoc4, Sec10/Exoc5, Sec15/Exoc6, Exo70/Exoc7 and Exo84/Exoc8.

Functionally, component of the exocyst complex involved in the docking of exocytic vesicles with fusion sites on the plasma membrane. This Drosophila melanogaster (Fruit fly) protein is Exocyst complex component 5.